Consider the following 182-residue polypeptide: Dirigent protein 1 (182 aa).

The first 24 residues, 1-24 (MAKRFLLLLPLLSSILLLAVSVTA), serve as a signal peptide directing secretion. Residue Asn-125 is glycosylated (N-linked (GlcNAc...) asparagine).

It belongs to the plant dirigent protein family. Homodimer.

It is found in the secreted. The protein resides in the extracellular space. The protein localises to the apoplast. Functionally, dirigent proteins impart stereoselectivity on the phenoxy radical-coupling reaction, yielding optically active lignans from two molecules of coniferyl alcohol in the biosynthesis of lignans, flavonolignans, and alkaloids and thus plays a central role in plant secondary metabolism. This chain is Dirigent protein 1 (DIR1), found in Arabidopsis thaliana (Mouse-ear cress).